The following is a 707-amino-acid chain: Drebrin (707 aa).

Ala2 carries the N-acetylalanine modification. One can recognise an ADF-H domain in the interval 3–134 (GVSFSGHRLE…DAGAIGQRLS (132 aa)). Ser141 and Ser142 each carry phosphoserine. The span at 209-236 (ERMEQERQEQEERERRYREREQQIEEHR) shows a compositional bias: basic and acidic residues. Disordered stretches follow at residues 209–438 (ERME…VCKE), 452–497 (AEEP…TSVA), 531–557 (WPGN…AEAS), 582–609 (LLNF…PLAA), and 630–707 (LEPE…EGGD). Ser241 is subject to Phosphoserine. The span at 288–298 (DNPREFFRQQE) shows a compositional bias: basic and acidic residues. The span at 329 to 343 (SDSGPSSSSSSSSSP) shows a compositional bias: low complexity. At Ser342 the chain carries Phosphoserine. Over residues 355 to 364 (RTPNLSSSLP) the composition is skewed to polar residues. Phosphothreonine occurs at positions 377 and 381. Residues 380–395 (PTRSPSDSSTASTPIT) are compositionally biased toward polar residues. Ser383, Ser385, and Ser391 each carry phosphoserine. At Thr392 the chain carries Phosphothreonine. The span at 409-420 (QPPPPPPPPPPA) shows a compositional bias: pro residues. Residues 428–438 (PRLDGEEVCKE) are compositionally biased toward basic and acidic residues. Ser467 carries the phosphoserine modification. Residue Thr549 is modified to Phosphothreonine. Positions 639–652 (NGETTQKEGTQQAS) are enriched in polar residues. At Ser659 the chain carries Phosphoserine. Residues 695–707 (PVPEEEEGFEGGD) are compositionally biased toward acidic residues.

Interacts with RUFY. Interacts with CXCR4; this interaction is enhanced by antigenic stimulation. Interacts (via ADF-H domain) with ZMYND8 (via N-terminus); the interaction leads to sequestering of ZMYND8 in the cytoplasm. ISGylated. Brain neurons.

It localises to the cytoplasm. It is found in the cell projection. Its subcellular location is the dendrite. The protein localises to the cell cortex. The protein resides in the cell junction. It localises to the growth cone. Its function is as follows. Actin cytoskeleton-organizing protein that plays a role in the formation of cell projections. Required for actin polymerization at immunological synapses (IS) and for the recruitment of the chemokine receptor CXCR4 to IS. Plays a role in dendritic spine morphogenesis and organization, including the localization of the dopamine receptor DRD1 to the dendritic spines. Involved in memory-related synaptic plasticity in the hippocampus. The protein is Drebrin (Dbn1) of Rattus norvegicus (Rat).